A 157-amino-acid chain; its full sequence is Acetyltransferase PseH (157 aa).

The 148-residue stretch at 5 to 152 folds into the N-acetyltransferase domain; that stretch reads KNFTELNSQE…YHICLKQSDC (148 aa).

Catalyzes the third step in the biosynthesis of pseudaminic acid, a sialic-acid-like sugar that is used to modify flagellin. Mediates N-4 acetylation of UDP-4-amino-4,6-dideoxy-beta-L-AltNAc to form UDP-2,4-diacetamido-2,4,6-trideoxy-beta-L-altropyranose. This chain is Acetyltransferase PseH (pseH), found in Campylobacter jejuni subsp. jejuni serotype O:23/36 (strain 81-176).